We begin with the raw amino-acid sequence, 1476 residues long: Glucosyltransferase-I (1476 aa).

The N-terminal stretch at 1 to 34 (MDKKVRYKLRKVKKRWVTVSVASAVMTLTTLSGG) is a signal peptide. 2 disordered regions span residues 42 to 89 (ESKS…ISSS) and 102 to 141 (PYTV…TEAD). Polar residues-rich tracts occupy residues 43–81 (SKSQ…QTNH) and 102–139 (PYTV…QTTE). Cell wall-binding repeat units follow at residues 159–178 (LPNV…NGKV) and 179–199 (RTNF…TGAY). Positions 200–1051 (TDTSIDTVNK…NTYFNISDNK (852 aa)) are catalytic; approximate. Cell wall-binding repeat units lie at residues 1087–1106 (KNTF…NGYM), 1107–1126 (VTGA…NGLQ), 1170–1189 (SVGL…MGYQ), 1214–1234 (RNRF…DGAA), 1235–1254 (VTGS…NGVQ), 1279–1299 (RNRF…NGYA), 1300–1319 (VTGA…NGVQ), 1344–1364 (RNRF…NGYA), 1365–1384 (VTGA…NGVQ), 1409–1429 (RNRF…NGYA), and 1430–1449 (VTGA…NGVQ).

The protein belongs to the glycosyl hydrolase 70 family.

It localises to the secreted. The catalysed reaction is [(1-&gt;6)-alpha-D-glucosyl](n) + sucrose = [(1-&gt;6)-alpha-D-glucosyl](n+1) + D-fructose. Functionally, production of extracellular glucans, that are thought to play a key role in the development of the dental plaque because of their ability to adhere to smooth surfaces and mediate the aggregation of bacterial cells and food debris. This is Glucosyltransferase-I (gtfB) from Streptococcus mutans serotype c (strain ATCC 700610 / UA159).